The sequence spans 443 residues: Intermediate filament protein ifd-2 (443 aa).

Residues 1 to 58 form a head region; sequence MTDPLNPTRLQNHPALARIIESGRTNLPTGITTSGALSAYAQNAAAIIRDNREREKVE. The 351-residue stretch at 55–405 folds into the IF rod domain; the sequence is EKVEIADLNN…KLMENAEHLR (351 aa). A coil 1A region spans residues 59–90; that stretch reads IADLNNRLARYVEKVRFLEAQNRVLENDIGVF. The segment at 91 to 104 is linker 1; it reads RNAAHTHSERIAVY. The tract at residues 105–239 is coil 1B; that stretch reads FESEKASLFT…SQHDIAIREE (135 aa). A linker 12 region spans residues 240 to 257; it reads ISKARRDTTNKNRDYFHN. Residues 258 to 403 are coil 2; that stretch reads ELHAAMKEIR…YRKLMENAEH (146 aa). Positions 404–443 are tail; that stretch reads LRTTVQTHVTYNAPPPPLPQSGPRTTSYHAYGSAYNDSLL.

The protein belongs to the intermediate filament family.

It localises to the cytoplasm. In terms of biological role, cytoplasmic intermediate filaments provide mechanical strength to cells. Not essential protein. This Caenorhabditis elegans protein is Intermediate filament protein ifd-2 (ifd-2).